We begin with the raw amino-acid sequence, 187 residues long: 1,6-anhydro-N-acetylmuramyl-L-alanine amidase AmpD (187 aa).

In terms of domain architecture, N-acetylmuramoyl-L-alanine amidase spans 30 to 167; it reads LLVVHNISLP…APERKTDPGP (138 aa). Residue H34 participates in Zn(2+) binding. The active-site Proton acceptor is E116. H154 and D164 together coordinate Zn(2+).

The protein belongs to the N-acetylmuramoyl-L-alanine amidase 2 family. Zn(2+) serves as cofactor.

It is found in the cytoplasm. It catalyses the reaction Hydrolyzes the link between N-acetylmuramoyl residues and L-amino acid residues in certain cell-wall glycopeptides.. With respect to regulation, amidase activity is inhibited by metal chelators such as EDTA, dipicolinic acid or 1,10-phenanthroline. Involved in cell wall peptidoglycan recycling. Specifically cleaves the amide bond between the lactyl group of N-acetylmuramic acid and the alpha-amino group of the L-alanine in degradation products containing an anhydro N-acetylmuramyl moiety. Is also involved in beta-lactamase induction. The polypeptide is 1,6-anhydro-N-acetylmuramyl-L-alanine amidase AmpD (Citrobacter freundii).